Reading from the N-terminus, the 371-residue chain is MALETFVNSEPFTFGVELEIQVVNTHNYDLTKAASDLMRLIQGETFPGNITPEITESMIELSTGICHSHEQAVSELHAIRDVLVKAADQLNVGLAGGGTHAFQQWSDRQIYDAPRFQYISELYGYLAKQFTVFGQHVHIGCPDPDSALFLLHSMSRFIPHFIALSASSPFVQNVDTGFHSARLNSVFAFPLSGRAPFVLTWDSFEEYFTKMVNTGVVNSMKDFYWDIRPKPGYGTIEVRVMDTPLSVDRAAAIACYIQTLARYLLTDRPLKLSEDDYLVYTFNRFEACRFGLEGTCVNPQTGERRTIAEDILDTLDRIAPHAAALGSRAALDEIGALANARVNDASWLRTVFKQEKSLNETVRQQCLRWRE.

It belongs to the glutamate--cysteine ligase type 2 family. YbdK subfamily.

The enzyme catalyses L-cysteine + L-glutamate + ATP = gamma-L-glutamyl-L-cysteine + ADP + phosphate + H(+). Its function is as follows. ATP-dependent carboxylate-amine ligase which exhibits weak glutamate--cysteine ligase activity. The polypeptide is Putative glutamate--cysteine ligase 2 (Burkholderia lata (strain ATCC 17760 / DSM 23089 / LMG 22485 / NCIMB 9086 / R18194 / 383)).